The chain runs to 551 residues: Glucose-6-phosphate isomerase (551 aa).

Catalysis depends on E349, which acts as the Proton donor. Residues H378 and K480 contribute to the active site.

This sequence belongs to the GPI family.

It is found in the cytoplasm. The catalysed reaction is alpha-D-glucose 6-phosphate = beta-D-fructose 6-phosphate. It participates in carbohydrate biosynthesis; gluconeogenesis. The protein operates within carbohydrate degradation; glycolysis; D-glyceraldehyde 3-phosphate and glycerone phosphate from D-glucose: step 2/4. Functionally, catalyzes the reversible isomerization of glucose-6-phosphate to fructose-6-phosphate. The polypeptide is Glucose-6-phosphate isomerase (Prochlorococcus marinus (strain MIT 9313)).